Consider the following 356-residue polypeptide: Glutamine synthetase cytosolic isozyme 2 (356 aa).

In terms of domain architecture, GS beta-grasp spans 19 to 99 (IIAEYIWIGG…VMCDTYTPAG (81 aa)). In terms of domain architecture, GS catalytic spans 106–356 (KRHNAAKIFS…IAESTILWKP (251 aa)).

It belongs to the glutamine synthetase family. Homooctamer.

It localises to the cytoplasm. It catalyses the reaction L-glutamate + NH4(+) + ATP = L-glutamine + ADP + phosphate + H(+). This is Glutamine synthetase cytosolic isozyme 2 (GS1-2) from Vitis vinifera (Grape).